The following is a 233-amino-acid chain: N-(5'-phosphoribosyl)anthranilate isomerase (233 aa).

This sequence belongs to the TrpF family.

The catalysed reaction is N-(5-phospho-beta-D-ribosyl)anthranilate = 1-(2-carboxyphenylamino)-1-deoxy-D-ribulose 5-phosphate. It participates in amino-acid biosynthesis; L-tryptophan biosynthesis; L-tryptophan from chorismate: step 3/5. The protein is N-(5'-phosphoribosyl)anthranilate isomerase of Ralstonia pickettii (strain 12J).